A 780-amino-acid polypeptide reads, in one-letter code: Ribonucleoside-diphosphate reductase large subunit (780 aa).

Substrate is bound by residues threonine 177, 192–193, glycine 223, 393–397, and 595–599; these read SC, NLCAE, and PTVGS. The cysteines at positions 193 and 409 are disulfide-linked. Asparagine 393 acts as the Proton acceptor in catalysis. Catalysis depends on cysteine 395, which acts as the Cysteine radical intermediate. Glutamate 397 functions as the Proton acceptor in the catalytic mechanism.

The protein belongs to the ribonucleoside diphosphate reductase large chain family. Heterotetramer composed of a homodimer of the large subunit (R1) and a homodimer of the small subunit (R2). Larger multisubunit protein complex are also active, composed of (R1)n(R2)n.

It carries out the reaction a 2'-deoxyribonucleoside 5'-diphosphate + [thioredoxin]-disulfide + H2O = a ribonucleoside 5'-diphosphate + [thioredoxin]-dithiol. In terms of biological role, ribonucleoside-diphosphate reductase holoenzyme provides the precursors necessary for viral DNA synthesis. Allows virus growth in non-dividing cells, as well as reactivation from latency in infected hosts. Catalyzes the biosynthesis of deoxyribonucleotides from the corresponding ribonucleotides. The polypeptide is Ribonucleoside-diphosphate reductase large subunit (Connochaetes taurinus (Blue wildebeest)).